The following is a 133-amino-acid chain: MAKTFYVVVIVLCLGFIHQKAYGVYMQKLSDKKLCADDECIYAISFGRAEDDYNAPDCRFVNLKKGELVYIYTKLVKENDDAGEFWSGSVYSDQYRDQQGLVGYFPSSLVTELTVYKDELQELPTTAVDFYCD.

An N-terminal signal peptide occupies residues 1–23 (MAKTFYVVVIVLCLGFIHQKAYG). Cystine bridges form between C35–C40 and C58–C132. In terms of domain architecture, SH3 spans 42–115 (YAISFGRAED…PSSLVTELTV (74 aa)).

This sequence belongs to the MIA/OTOR family.

The protein localises to the secreted. This Aquarana catesbeiana (American bullfrog) protein is Otoraplin (OTOR).